We begin with the raw amino-acid sequence, 184 residues long: ATP synthase subunit delta (184 aa).

This sequence belongs to the ATPase delta chain family. F-type ATPases have 2 components, F(1) - the catalytic core - and F(0) - the membrane proton channel. F(1) has five subunits: alpha(3), beta(3), gamma(1), delta(1), epsilon(1). F(0) has three main subunits: a(1), b(2) and c(10-14). The alpha and beta chains form an alternating ring which encloses part of the gamma chain. F(1) is attached to F(0) by a central stalk formed by the gamma and epsilon chains, while a peripheral stalk is formed by the delta and b chains.

The protein resides in the cell inner membrane. Functionally, f(1)F(0) ATP synthase produces ATP from ADP in the presence of a proton or sodium gradient. F-type ATPases consist of two structural domains, F(1) containing the extramembraneous catalytic core and F(0) containing the membrane proton channel, linked together by a central stalk and a peripheral stalk. During catalysis, ATP synthesis in the catalytic domain of F(1) is coupled via a rotary mechanism of the central stalk subunits to proton translocation. In terms of biological role, this protein is part of the stalk that links CF(0) to CF(1). It either transmits conformational changes from CF(0) to CF(1) or is implicated in proton conduction. This chain is ATP synthase subunit delta, found in Paramagnetospirillum magneticum (strain ATCC 700264 / AMB-1) (Magnetospirillum magneticum).